Consider the following 1415-residue polypeptide: DNA-directed RNA polymerase subunit beta' (1415 aa).

4 residues coordinate Zn(2+): Cys70, Cys72, Cys85, and Cys88. Residues Asp461, Asp463, and Asp465 each coordinate Mg(2+). Zn(2+) is bound by residues Cys820, Cys894, Cys901, and Cys904. The segment at 1382-1415 (ERERAQAIADEEQSLFIEPPPVVQATTEGEGDNA) is disordered.

It belongs to the RNA polymerase beta' chain family. The RNAP catalytic core consists of 2 alpha, 1 beta, 1 beta' and 1 omega subunit. When a sigma factor is associated with the core the holoenzyme is formed, which can initiate transcription. Mg(2+) is required as a cofactor. Requires Zn(2+) as cofactor.

It carries out the reaction RNA(n) + a ribonucleoside 5'-triphosphate = RNA(n+1) + diphosphate. In terms of biological role, DNA-dependent RNA polymerase catalyzes the transcription of DNA into RNA using the four ribonucleoside triphosphates as substrates. In Cupriavidus pinatubonensis (strain JMP 134 / LMG 1197) (Cupriavidus necator (strain JMP 134)), this protein is DNA-directed RNA polymerase subunit beta'.